The sequence spans 142 residues: Glia maturation factor beta (142 aa).

Serine 2 bears the N-acetylserine mark. The ADF-H domain maps to 4-139 (SLVVCDVAED…TEEWLREKLG (136 aa)).

The protein belongs to the actin-binding proteins ADF family. GMF subfamily. Post-translationally, phosphorylated; stimulated by phorbol ester.

Its function is as follows. This protein causes differentiation of brain cells, stimulation of neural regeneration, and inhibition of proliferation of tumor cells. This is Glia maturation factor beta (Gmfb) from Mus musculus (Mouse).